A 346-amino-acid chain; its full sequence is Sulfate/thiosulfate import ATP-binding protein CysA (346 aa).

The ABC transporter domain maps to 3-237 (VRVANVRKEF…PNSPFVYGFI (235 aa)). Residue 35-42 (GPSGSGKT) coordinates ATP.

Belongs to the ABC transporter superfamily. Sulfate/tungstate importer (TC 3.A.1.6) family. As to quaternary structure, the complex is composed of two ATP-binding proteins (CysA), two transmembrane proteins (CysT and CysW) and a solute-binding protein (CysP).

It localises to the cell inner membrane. The catalysed reaction is sulfate(out) + ATP + H2O = sulfate(in) + ADP + phosphate + H(+). It carries out the reaction thiosulfate(out) + ATP + H2O = thiosulfate(in) + ADP + phosphate + H(+). Its function is as follows. Part of the ABC transporter complex CysAWTP involved in sulfate/thiosulfate import. Responsible for energy coupling to the transport system. The polypeptide is Sulfate/thiosulfate import ATP-binding protein CysA (Mesorhizobium japonicum (strain LMG 29417 / CECT 9101 / MAFF 303099) (Mesorhizobium loti (strain MAFF 303099))).